The following is a 258-amino-acid chain: Imidazole glycerol phosphate synthase subunit HisF (258 aa).

Catalysis depends on residues Asp-11 and Asp-130.

Belongs to the HisA/HisF family. In terms of assembly, heterodimer of HisH and HisF.

The protein localises to the cytoplasm. The enzyme catalyses 5-[(5-phospho-1-deoxy-D-ribulos-1-ylimino)methylamino]-1-(5-phospho-beta-D-ribosyl)imidazole-4-carboxamide + L-glutamine = D-erythro-1-(imidazol-4-yl)glycerol 3-phosphate + 5-amino-1-(5-phospho-beta-D-ribosyl)imidazole-4-carboxamide + L-glutamate + H(+). Its pathway is amino-acid biosynthesis; L-histidine biosynthesis; L-histidine from 5-phospho-alpha-D-ribose 1-diphosphate: step 5/9. In terms of biological role, IGPS catalyzes the conversion of PRFAR and glutamine to IGP, AICAR and glutamate. The HisF subunit catalyzes the cyclization activity that produces IGP and AICAR from PRFAR using the ammonia provided by the HisH subunit. The chain is Imidazole glycerol phosphate synthase subunit HisF from Blochmanniella pennsylvanica (strain BPEN).